Consider the following 210-residue polypeptide: Large ribosomal subunit protein uL4 (210 aa).

The segment covering 41–51 has biased composition (polar residues); sequence ANARQGTQSTK. Disordered stretches follow at residues 41 to 60 and 67 to 98; these read ANARQGTQSTKTRGEVQGSS and KGTGNARMGTNRSPVRRHGGVAFGPRPRDFSK.

It belongs to the universal ribosomal protein uL4 family. As to quaternary structure, part of the 50S ribosomal subunit.

Its function is as follows. One of the primary rRNA binding proteins, this protein initially binds near the 5'-end of the 23S rRNA. It is important during the early stages of 50S assembly. It makes multiple contacts with different domains of the 23S rRNA in the assembled 50S subunit and ribosome. In terms of biological role, forms part of the polypeptide exit tunnel. In Dehalococcoides mccartyi (strain ATCC BAA-2100 / JCM 16839 / KCTC 5957 / BAV1), this protein is Large ribosomal subunit protein uL4.